The primary structure comprises 508 residues: UDP-N-acetylmuramoyl-L-alanyl-D-glutamate--L-lysine ligase (508 aa).

Residue S47 coordinates UDP-N-acetyl-alpha-D-muramoyl-L-alanyl-D-glutamate. 124 to 130 serves as a coordination point for ATP; the sequence is GTKGKTT. UDP-N-acetyl-alpha-D-muramoyl-L-alanyl-D-glutamate is bound by residues 168–169, S195, and R203; that span reads TT. Position 237 is an N6-carboxylysine (K237). The L-lysine recognition motif signature appears at 425-428; sequence DDPA.

It belongs to the MurCDEF family. MurE subfamily. Carboxylation is probably crucial for Mg(2+) binding and, consequently, for the gamma-phosphate positioning of ATP.

It is found in the cytoplasm. It carries out the reaction UDP-N-acetyl-alpha-D-muramoyl-L-alanyl-D-glutamate + L-lysine + ATP = UDP-N-acetyl-alpha-D-muramoyl-L-alanyl-gamma-D-glutamyl-L-lysine + ADP + phosphate + H(+). It functions in the pathway cell wall biogenesis; peptidoglycan biosynthesis. Catalyzes the addition of L-lysine to the nucleotide precursor UDP-N-acetylmuramoyl-L-alanyl-D-glutamate (UMAG) in the biosynthesis of bacterial cell-wall peptidoglycan. The chain is UDP-N-acetylmuramoyl-L-alanyl-D-glutamate--L-lysine ligase from Enterococcus faecalis (strain ATCC 700802 / V583).